The chain runs to 231 residues: Acyl-protein thioesterase 2 (231 aa).

The S-palmitoyl cysteine moiety is linked to residue cysteine 2. Serine 82 carries the phosphoserine modification. Residues serine 122, aspartate 176, and histidine 210 each act as charge relay system in the active site.

Belongs to the AB hydrolase superfamily. AB hydrolase 2 family. As to expression, ubiquitous; detected at low levels.

It localises to the cytoplasm. The enzyme catalyses S-hexadecanoyl-L-cysteinyl-[protein] + H2O = L-cysteinyl-[protein] + hexadecanoate + H(+). It catalyses the reaction prostaglandin E2 1-glyceryl ester + H2O = prostaglandin E2 + glycerol + H(+). The catalysed reaction is 1-hexadecanoyl-sn-glycero-3-phosphocholine + H2O = sn-glycerol 3-phosphocholine + hexadecanoate + H(+). It carries out the reaction 1-octadecanoyl-sn-glycero-3-phosphocholine + H2O = octadecanoate + sn-glycerol 3-phosphocholine + H(+). The enzyme catalyses 1-hexadecanoyl-sn-glycero-3-phosphate + H2O = sn-glycerol 3-phosphate + hexadecanoate + H(+). It catalyses the reaction 1-hexadecanoyl-sn-glycero-3-phospho-L-serine + H2O = sn-glycero-3-phospho-L-serine + hexadecanoate + H(+). Acts as an acyl-protein thioesterase hydrolyzing fatty acids from S-acylated cysteine residues in proteins such as trimeric G alpha proteins, GSDMD, GAP43, ZDHHC6 or HRAS. Deacylates GAP43. Mediates depalmitoylation of ZDHHC6. Has lysophospholipase activity. Hydrolyzes prostaglandin glycerol esters (PG-Gs). Hydrolyzes PG-Gs in the following order prostaglandin D2-glycerol ester (PGD2-G) &gt; prostaglandin E2 glycerol ester (PGE2-G) &gt; prostaglandin F2-alpha-glycerol ester (PGF2-alpha-G). Hydrolyzes 1-arachidonoylglycerol but not 2-arachidonoylglycerol or arachidonoylethanolamide. This Mus musculus (Mouse) protein is Acyl-protein thioesterase 2 (Lypla2).